The following is a 200-amino-acid chain: Imidazoleglycerol-phosphate dehydratase (200 aa).

The protein belongs to the imidazoleglycerol-phosphate dehydratase family.

The protein resides in the cytoplasm. It catalyses the reaction D-erythro-1-(imidazol-4-yl)glycerol 3-phosphate = 3-(imidazol-4-yl)-2-oxopropyl phosphate + H2O. Its pathway is amino-acid biosynthesis; L-histidine biosynthesis; L-histidine from 5-phospho-alpha-D-ribose 1-diphosphate: step 6/9. The polypeptide is Imidazoleglycerol-phosphate dehydratase (Bifidobacterium animalis subsp. lactis (strain AD011)).